The primary structure comprises 490 residues: Hippocampus abundant transcript 1 protein (490 aa).

N-acetylmethionine is present on methionine 1. At 1 to 40 the chain is on the extracellular side; sequence MTQGKKKKRAANRSIMLAKKIIIKDGGTPQGIGSPSVYHA. Asparagine 12 carries N-linked (GlcNAc...) asparagine glycosylation. The chain crosses the membrane as a helical span at residues 41–61; the sequence is VIVIFLEFFAWGLLTAPTLVV. Residues 62-74 lie on the Cytoplasmic side of the membrane; it reads LHETFPKHTFLMN. The helical transmembrane segment at 75-95 threads the bilayer; that stretch reads GLIQGVKGLLSFLSAPLIGAL. The Extracellular segment spans residues 96–103; that stretch reads SDVWGRKS. A helical transmembrane segment spans residues 104–124; it reads FLLLTVFFTCAPIPLMKISPW. The Cytoplasmic portion of the chain corresponds to 125 to 126; the sequence is WY. The chain crosses the membrane as a helical span at residues 127–147; that stretch reads FAVISVSGVFAVTFSVVFAYV. The Extracellular segment spans residues 148 to 160; it reads ADITQEHERSMAY. The chain crosses the membrane as a helical span at residues 161 to 181; the sequence is GLVSATFAASLVTSPAIGAYL. The Cytoplasmic segment spans residues 182–188; that stretch reads GRVYGDS. Residues 189–209 traverse the membrane as a helical segment; sequence LVVVLATAIALLDICFILVAV. Topologically, residues 210–243 are extracellular; sequence PESLPEKMRPASWGAPISWEQADPFASLKKVGQD. The helical transmembrane segment at 244 to 264 threads the bilayer; it reads SIVLLICITVFLSYLPEAGQY. The Cytoplasmic portion of the chain corresponds to 265-284; sequence SSFFLYLRQIMKFSPESVAA. A helical membrane pass occupies residues 285–305; the sequence is FIAVLGILSIIAQTIVLSLLM. Over 306 to 313 the chain is Extracellular; the sequence is RSIGNKNT. The helical transmembrane segment at 314 to 334 threads the bilayer; the sequence is ILLGLGFQILQLAWYGFGSEP. Residues 335–337 lie on the Cytoplasmic side of the membrane; sequence WMM. The chain crosses the membrane as a helical span at residues 338-358; the sequence is WAAGAVAAMSSITFPAVSALV. Residues 359–379 lie on the Extracellular side of the membrane; sequence SRTADADQQGVVQGMITGIRG. Residues 380–400 form a helical membrane-spanning segment; sequence LCNGLGPALYGFIFYIFHVEL. The Cytoplasmic portion of the chain corresponds to 401 to 427; it reads KELPITGTDLGTNTSPQHHFEQNSIIP. Residues 428–448 form a helical membrane-spanning segment; that stretch reads GPPFLFGACSVLLALLVALFI. Residues 449-490 are Extracellular-facing; the sequence is PEHTNLSLRSSSWRKHCGSHSHPHSTQAPGEAKEPLLQDTNV. Residue asparagine 453 is glycosylated (N-linked (GlcNAc...) asparagine). The tract at residues 466-490 is disordered; sequence GSHSHPHSTQAPGEAKEPLLQDTNV.

Belongs to the major facilitator superfamily. In terms of tissue distribution, expressed in various tissues.

It is found in the membrane. In Mus musculus (Mouse), this protein is Hippocampus abundant transcript 1 protein.